A 759-amino-acid polypeptide reads, in one-letter code: Protein transport protein sec23-1 (759 aa).

Residues Cys56, Cys60, Cys79, and Cys82 each coordinate Zn(2+).

Belongs to the SEC23/SEC24 family. SEC23 subfamily. The COPII coat is composed of at least 5 proteins: the sec23/24 complex, the sec13/31 complex, and the protein sar1.

The protein resides in the cytoplasm. The protein localises to the cytoplasmic vesicle. Its subcellular location is the COPII-coated vesicle membrane. It is found in the endoplasmic reticulum membrane. It localises to the golgi apparatus membrane. In terms of biological role, component of the coat protein complex II (COPII) which promotes the formation of transport vesicles from the endoplasmic reticulum (ER). The coat has two main functions, the physical deformation of the endoplasmic reticulum membrane into vesicles and the selection of cargo molecules. This Schizosaccharomyces pombe (strain 972 / ATCC 24843) (Fission yeast) protein is Protein transport protein sec23-1 (sec231).